Reading from the N-terminus, the 220-residue chain is Deoxyribose-phosphate aldolase (220 aa).

Residue Asp89 is the Proton donor/acceptor of the active site. Lys151 (schiff-base intermediate with acetaldehyde) is an active-site residue. Residue Lys180 is the Proton donor/acceptor of the active site.

The protein belongs to the DeoC/FbaB aldolase family. DeoC type 1 subfamily.

The protein resides in the cytoplasm. It catalyses the reaction 2-deoxy-D-ribose 5-phosphate = D-glyceraldehyde 3-phosphate + acetaldehyde. It participates in carbohydrate degradation; 2-deoxy-D-ribose 1-phosphate degradation; D-glyceraldehyde 3-phosphate and acetaldehyde from 2-deoxy-alpha-D-ribose 1-phosphate: step 2/2. In terms of biological role, catalyzes a reversible aldol reaction between acetaldehyde and D-glyceraldehyde 3-phosphate to generate 2-deoxy-D-ribose 5-phosphate. The protein is Deoxyribose-phosphate aldolase of Staphylococcus haemolyticus (strain JCSC1435).